Here is a 505-residue protein sequence, read N- to C-terminus: Cytochrome P450 71A2 (505 aa).

The chain crosses the membrane as a helical span at residues 7-27 (WYSLLIPLFVFIFLLIHHCFF). Position 448 (C448) interacts with heme.

Belongs to the cytochrome P450 family. Heme is required as a cofactor.

The protein localises to the membrane. Its function is as follows. May have a role in maturation, such as during flavor formation or other metabolite production specific to aging tissues. The chain is Cytochrome P450 71A2 (CYP71A2) from Solanum melongena (Eggplant).